Here is a 119-residue protein sequence, read N- to C-terminus: Large ribosomal subunit protein bL20 (119 aa).

The protein belongs to the bacterial ribosomal protein bL20 family.

Functionally, binds directly to 23S ribosomal RNA and is necessary for the in vitro assembly process of the 50S ribosomal subunit. It is not involved in the protein synthesizing functions of that subunit. In Anoxybacillus flavithermus (strain DSM 21510 / WK1), this protein is Large ribosomal subunit protein bL20.